The sequence spans 133 residues: MPPKTRGAVRKPRKKDKKNIALGQAHIKSTFNNTIVTITDPAGAVIAWASSGEVGFKGSRKSTPFAAQLAAEQAAKRAQEHGVRKVDVFVKGPGSGRETAIRSLTAAGLEVGSIQDVTPSAHNGCRPPKRRRV.

The disordered stretch occupies residues 1–22; the sequence is MPPKTRGAVRKPRKKDKKNIAL. Over residues 7–17 the composition is skewed to basic residues; sequence GAVRKPRKKDK.

This sequence belongs to the universal ribosomal protein uS11 family. Part of the 30S ribosomal subunit. Interacts with proteins S7 and S18. Binds to IF-3.

In terms of biological role, located on the platform of the 30S subunit, it bridges several disparate RNA helices of the 16S rRNA. Forms part of the Shine-Dalgarno cleft in the 70S ribosome. The sequence is that of Small ribosomal subunit protein uS11 from Renibacterium salmoninarum (strain ATCC 33209 / DSM 20767 / JCM 11484 / NBRC 15589 / NCIMB 2235).